We begin with the raw amino-acid sequence, 1690 residues long: MAGNKRKRSNASEGSDSQGNERISSLSANEATQDFPRGGASSLTPLEYKEAVLEAKKDFMESASGTAELSKKTRPKKKGSKKSSKSELDNEENLKVHIQSLRYKNITPGSLILGQIAQINTLDLAVSLPNCLTGYVPITNISDKLSDRLDSIDNHAEDNAATEEEDGLNQIPDLMDLYKVGQWVRVSVTALGSENTTKTGKRHIELSLKPQDANGSAPEAADFVAGSMIQAVVSSIEDHGIVFDIGINNYTGFLSKKHINDFPFVEGQSLLCSVISKEDRIFHLSLTATSTKALEVMPSVQAILPGDYINVLVTDIKESGVIAKYMGVVDVTSDIYHSSPVKGEDLEDKFQLAKSVPARVLFVIPGDPPKIAVSFLPHVLTFNFATPNTPHPDQLDIGFIVNAAKVTYVSSSLGVFCDVGVPEISGFAHISRLSDKKVAGISPNSGPYKVDSTHEARIINYSYVDNLYILSFQQSVLNQQFLRIEDIEVGQFVDGTIAKLIPQGIVVTISEGINGLVPSTHMADIALQFPERRFKVGSSVKCRVLSTNVLRKRVLLTLKKSLLNTDLPLIYDYEQATPGTQTVGTLARIFEDGAIVEFYNSVRAFLPVSEMSEAYIRDAREHFKVGQTLSVTIVSCDPENRKMRVGCREQSWDAKRLERFENIKAGSVLSGIVLQKTEDSVIVDLGDKVTGVITLGQLCDGDLNKCSKVMNKLRASTKLAEVLVLRKDTSKKLISLSLKKSLVEAAKENRMPINITDLKEGIKYFGFVRNATTFGVFVEFCDGLVALVPKAYISEEYVPVPSAVYKPQQSVTCVCLSVELSQEKAFMSFKPLAQKQEKAVEFMESKYDIDNPVDETIKKTYDYVAGKITWAVVTSAKASQLNVDLAANVHGRVDVSEVFDNFGEIVDPNKPLKRFHKGDKIRVRVLGIHDSRNHKFLPISHRVSPKQFLELSVRPSILNMEPFSMKEPQFKKGDEVTGFVNNVSKECVWVSLTPSVNGRIPILDLTTDVKELNSLQKHFFLGKAIKCYVVNAEDSITLSAIGPLQGFENLTPGSRLVGKVTNVNEAGAILQLPGHMSGRVSRIDMFDDYDILPETKFTRNNLVGVCVLSVDVPNRKVALSARNSRTQSQPVEIKDKEINSVDDLKIGDICRGFVCNVANQGLFVTIGHNLIARVKIGELFDTFIKDWKPHFHVNQLVKGSIVGIDNDSKRIEMSLKQSKIKDSSEITKTFADIAVGSNLDGTVVKVGDYGVLIRIDGTDNIVGLCHKSEIADAVVLNISKLYSSGDKVRAHVLDVDSEKRRIALGLKSSYFDSDSDISMSDNEEDVEMRSEDQSDTSESEVGSKDDVQSEEVENLESAGDEDEEEEPSALQANGFDWTDGSTVFDKLADDTEDSEDEEDEEPKRKKSKSDRFDDEEKDLDEIPSTAADFERQLLSSPNSSLLWISYMAYHLNLNELQEAREVGKRALSTINYREEDEKLNVWMALLNLEVAYGTEDSLKEVFKEACAYCDALIVYEKLCGILIKGGKVDLADEYMQLMLKNFKQVPSVWIQYATFLLNNDKAEKAHGLLERSLQSLPKSEHVGIIEKFAILEFKNGDPERGRTIFEGLLSSYPKRLDLWNVLIDMEMKQDDPSIVRRLFQRLLALNLSTKKAKFAFKKWLAYEKNIGDDEGAEQVKRRAIEYVSESHSEN.

Disordered stretches follow at residues 1 to 42 and 59 to 90; these read MAGN…GASS and FMES…ELDN. A compositionally biased stretch (polar residues) spans 11–32; sequence ASEGSDSQGNERISSLSANEAT. Positions 72–83 are enriched in basic residues; that stretch reads KTRPKKKGSKKS. 13 consecutive S1 motif domains span residues 109 to 209, 226 to 289, 306 to 376, 398 to 473, 490 to 559, 579 to 648, 666 to 739, 761 to 830, 866 to 942, 973 to 1044, 1053 to 1122, 1147 to 1216, and 1236 to 1307; these read GSLI…LSLK, GSMI…LTAT, GDYI…VSFL, GFIV…LSFQ, GQFV…LTLK, GTQT…VGCR, GSVL…LSLK, GIKY…MSFK, GKIT…ISHR, GDEV…IGPL, GSRL…LSAR, GDIC…MSLK, and GSNL…LGLK. The tract at residues 1313–1424 is disordered; it reads SDSDISMSDN…EEKDLDEIPS (112 aa). Composition is skewed to acidic residues over residues 1348 to 1367, 1390 to 1400, and 1412 to 1421; these read QSEE…EEEP, DTEDSEDEEDE, and FDDEEKDLDE. Threonine 1391 is subject to Phosphothreonine. At serine 1394 the chain carries Phosphoserine. 3 HAT repeats span residues 1420–1452, 1526–1558, and 1596–1628; these read DEIP…YHLN, GKVD…FLLN, and GDPE…MEMK. Residues serine 1684 and serine 1686 each carry the phosphoserine modification.

As to quaternary structure, component of the ribosomal small subunit (SSU) processome.

The protein localises to the nucleus. It is found in the nucleolus. Functionally, involved in the biogenesis of rRNA. Required for the formation of 18S and 5.8S rRNA. In Schizosaccharomyces pombe (strain 972 / ATCC 24843) (Fission yeast), this protein is rRNA biogenesis protein rrp5.